Reading from the N-terminus, the 694-residue chain is Elongation factor G 2 (694 aa).

The 277-residue stretch at 6–282 folds into the tr-type G domain; that stretch reads SKLRNIGISA…GVVDYLPDPT (277 aa). Residues 15–22, 82–86, and 136–139 each bind GTP; these read AHIDSGKT, DTPGH, and NKCD.

Belongs to the TRAFAC class translation factor GTPase superfamily. Classic translation factor GTPase family. EF-G/EF-2 subfamily.

Its subcellular location is the cytoplasm. In terms of biological role, catalyzes the GTP-dependent ribosomal translocation step during translation elongation. During this step, the ribosome changes from the pre-translocational (PRE) to the post-translocational (POST) state as the newly formed A-site-bound peptidyl-tRNA and P-site-bound deacylated tRNA move to the P and E sites, respectively. Catalyzes the coordinated movement of the two tRNA molecules, the mRNA and conformational changes in the ribosome. This chain is Elongation factor G 2, found in Anaeromyxobacter dehalogenans (strain 2CP-C).